The primary structure comprises 3498 residues: Mediator of RNA polymerase II transcription subunit 12 (3498 aa).

6 disordered regions span residues 365-456, 497-764, 2209-2576, 2589-2620, 2637-2889, and 2917-3498; these read IKQH…HTDI, GGVG…EPEK, AKKR…AYMK, ENNR…EAYA, LRKE…KEKQ, and NVAG…PNQY. Basic residues predominate over residues 368 to 394; sequence HEKRKAGSLKKSERRRRRGLSKNRPKK. Residues 404 to 416 are compositionally biased toward basic and acidic residues; that stretch reads SLDHDKVQIKQEP. 2 stretches are compositionally biased toward polar residues: residues 424 to 440 and 512 to 536; these read GQQS…SHQY and SNPT…SASP. Residues 539–570 adopt a coiled-coil conformation; the sequence is SVDKENECEKKEDESKTKEKNKDKEKDKEKEK. 2 stretches are compositionally biased toward basic and acidic residues: residues 540-578 and 593-614; these read VDKE…HTND and ANDK…TGKE. The span at 621–630 shows a compositional bias: low complexity; sequence SKTAKTSTSA. Composition is skewed to basic and acidic residues over residues 691 to 719, 738 to 764, and 2209 to 2285; these read EVDK…KKAD, ESEK…EPEK, and AKKR…KRAS. The segment at 2142–3498 is required for nuclear localization; the sequence is QTTRLDKVAK…YPNQQPPNQY (1357 aa). Residues 2203-2290 are a coiled coil; that stretch reads VIDEEEAKKR…EKRASDAAAA (88 aa). Composition is skewed to low complexity over residues 2342 to 2360 and 2409 to 2431; these read RADT…APIA and LADA…SSMP. The stretch at 2395–2420 forms a coiled coil; the sequence is RNLLNRKKEEKRNSLADASAAAAAAN. Positions 2444–2456 are enriched in polar residues; sequence QSAGATQQLQGMQ. A compositionally biased stretch (low complexity) spans 2459–2479; it reads QMGGSMSGMNQNMGGMNQSMS. Residues 2514–2530 are compositionally biased toward polar residues; the sequence is NRSSGPVSSETRQQIME. Basic and acidic residues-rich tracts occupy residues 2547-2576, 2589-2616, and 2637-2724; these read QKQR…AYMK, ENNR…RAAE, and LRKE…EQQR. Residues 2725–2770 show a composition bias toward low complexity; the sequence is RSQQNPYMNQQGQYSQQPPPSYQQSSYPNNYQPGQQGNQPPNYQQP. The segment covering 2771–2783 has biased composition (polar residues); that stretch reads SHQSMQQGHQAGY. The span at 2784-2810 shows a compositional bias: low complexity; the sequence is QQTSNQMQMNMQQQQNRQQGGPQQSFS. Composition is skewed to polar residues over residues 2816–2827, 2842–2852, 2868–2881, and 2926–2956; these read NQPSQPGYSGYN, RNPFGNQQDMQ, HAQQ…QLSL, and GQQQ…SSNP. Residues 2957–2993 show a composition bias toward low complexity; sequence QGGMQSYQQQQPVLGQPGPIQTGQSTQQQIPAQSQQQ. Positions 2994–3009 are enriched in polar residues; it reads YNSGRPQMHTTPTKND. Residues 3039–3100 show a composition bias toward low complexity; it reads GQNVPGGYQQ…NVSQSQSAAQ (62 aa). Polar residues predominate over residues 3103 to 3127; the sequence is RPSQDSAYQQSGYNQTGNQSYQRPD. 2 stretches are compositionally biased toward low complexity: residues 3128–3184 and 3192–3223; these read QQQQ…SAQY and QGYD…QTQQ. Residues 3231-3253 show a composition bias toward polar residues; it reads SGYTANSGGSSNILNQSMEESGL. A compositionally biased stretch (low complexity) spans 3254–3311; it reads NQGFSGASSNASSQQGGSSQMQQSGYGMPGNQMQMQQNQKQQVQRGMPTGMGQTNMGQ. The segment covering 3312-3321 has biased composition (gly residues); sequence SGMGQSGMGQ. 2 stretches are compositionally biased toward low complexity: residues 3336-3356 and 3370-3408; these read QGQQ…NQRG and QQQH…QGQQ. Residues 3414–3425 show a composition bias toward polar residues; that stretch reads PSQQQSGAAYSN. A compositionally biased stretch (low complexity) spans 3426-3436; it reads QMQFQGVRQGQ. Over residues 3437–3446 the composition is skewed to gly residues; that stretch reads QGMGGMGGSG. Low complexity predominate over residues 3447 to 3498; sequence QQQPQTQPHGSNQYYQQQQDQRMQQQPQQPGQQQQHGYGMGQYPNQQPPNQY.

This sequence belongs to the Mediator complex subunit 12 family. As to quaternary structure, component of the Mediator complex. In terms of tissue distribution, ubiquitously expressed.

The protein resides in the nucleus. Its function is as follows. Component of the Mediator complex, a coactivator involved in regulated gene transcription of nearly all RNA polymerase II-dependent genes. Mediator functions as a bridge to convey information from gene-specific regulatory proteins to the basal RNA polymerase II transcription machinery. Mediator is recruited to promoters by direct interactions with regulatory proteins and serves as a scaffold for the assembly of a functional preinitiation complex with RNA polymerase II and the general transcription factors. Functions downstream of let-60 during vulval induction. Required for asymmetric division of T-cells and for hypodermal development. This chain is Mediator of RNA polymerase II transcription subunit 12 (dpy-22), found in Caenorhabditis elegans.